Consider the following 396-residue polypeptide: Ribosomal RNA large subunit methyltransferase I (396 aa).

A PUA domain is found at 2–81 (TVSIYLAKGR…EAIDKDFFVR (80 aa)).

The protein belongs to the methyltransferase superfamily. RlmI family.

The protein resides in the cytoplasm. The enzyme catalyses cytidine(1962) in 23S rRNA + S-adenosyl-L-methionine = 5-methylcytidine(1962) in 23S rRNA + S-adenosyl-L-homocysteine + H(+). Specifically methylates the cytosine at position 1962 (m5C1962) of 23S rRNA. In Aliivibrio fischeri (strain MJ11) (Vibrio fischeri), this protein is Ribosomal RNA large subunit methyltransferase I.